The sequence spans 68 residues: Phycobilisome 7.8 kDa linker polypeptide, allophycocyanin-associated, core (68 aa).

Positions alanine 2 to alanine 57 constitute a CpcD-like domain.

This sequence belongs to the phycobilisome linker protein family.

The protein resides in the cellular thylakoid membrane. Functionally, rod linker protein, associated with allophycocyanin. Linker polypeptides determine the state of aggregation and the location of the disk-shaped phycobiliprotein units within the phycobilisome and modulate their spectroscopic properties in order to mediate a directed and optimal energy transfer. In Microchaete diplosiphon (Fremyella diplosiphon), this protein is Phycobilisome 7.8 kDa linker polypeptide, allophycocyanin-associated, core (apcC).